Consider the following 642-residue polypeptide: Threonine--tRNA ligase (642 aa).

In terms of domain architecture, TGS spans 1 to 61 (MPVITLPDGS…ENDATLAIIT (61 aa)). The catalytic stretch occupies residues 243–534 (DHRKIGKQLD…LTEEFAGFFP (292 aa)). Residues C334, H385, and H511 each coordinate Zn(2+).

This sequence belongs to the class-II aminoacyl-tRNA synthetase family. Homodimer. It depends on Zn(2+) as a cofactor.

The protein resides in the cytoplasm. The catalysed reaction is tRNA(Thr) + L-threonine + ATP = L-threonyl-tRNA(Thr) + AMP + diphosphate + H(+). Functionally, catalyzes the attachment of threonine to tRNA(Thr) in a two-step reaction: L-threonine is first activated by ATP to form Thr-AMP and then transferred to the acceptor end of tRNA(Thr). Also edits incorrectly charged L-seryl-tRNA(Thr). This Salmonella gallinarum (strain 287/91 / NCTC 13346) protein is Threonine--tRNA ligase.